Here is a 780-residue protein sequence, read N- to C-terminus: Putative ABC transporter ATP-binding protein BL0043 (780 aa).

2 ABC transporter domains span residues 2–238 (LKDI…QSET) and 282–531 (IRVS…GPAH). ATP is bound at residue 34–41 (GPNGSGKS). The interval 230–272 (AEAVSQSETEGSIGTEAAPSRPTNDSPRQREREDGSELPLLSD) is disordered. 316–323 (GVNGSGKS) is a binding site for ATP. 4 consecutive transmembrane segments (helical) span residues 551–573 (FTMFAVNTPTQLALGIAITLAVI), 586–608 (SIHPILILLVLMGVVNLFVVRTG), 623–645 (GVTIAVLYACRFALVIILGAVFL), and 759–778 (IAARDLIFAAAVIIYIAAII).

This sequence belongs to the ABC transporter superfamily.

Its subcellular location is the cell membrane. Functionally, probably part of an ABC transporter complex. Responsible for energy coupling to the transport system. This chain is Putative ABC transporter ATP-binding protein BL0043, found in Bifidobacterium longum (strain NCC 2705).